Consider the following 103-residue polypeptide: uncharacterized protein (103 aa).

Positions 12-88 (ADPAAFDEHY…AAADVANFAS (77 aa)) constitute an EthD domain.

This is an uncharacterized protein from Rhodococcus erythropolis (Arthrobacter picolinophilus).